Here is a 147-residue protein sequence, read N- to C-terminus: Biogenesis of lysosome-related organelles complex 1 subunit 1 (147 aa).

Disordered stretches follow at residues 1 to 25 and 125 to 147; these read MLTS…VRRK and SSGA…PSAT.

This sequence belongs to the BLOC1S1 family. In terms of assembly, component of the biogenesis of lysosome-related organelles complex-1 (BLOC-1) composed of Blos1, Blos2, Blos3, Blos4, Dysb, Muted, Pldn and Snapin. Interacts with Pldn.

Component of the biogenesis of lysosome-related organelles complex-1 (BLOC-1) involved in pigment granule biogenesis and membrane trafficking in synapses. In response to high synaptic activity at neuromuscular junctions, stabilizes Pldn protein levels and, together with Pldn, plays a role in promoting efficient synaptic vesicle recycling and re-formation through early endosomes. This is Biogenesis of lysosome-related organelles complex 1 subunit 1 from Drosophila melanogaster (Fruit fly).